The sequence spans 350 residues: Transmembrane protein 185B (350 aa).

7 helical membrane passes run 16 to 36 (LIYACLLLFSVLLPLRLDGVI), 41 to 61 (WAVFAPIWLWKLLVLAGASVG), 81 to 101 (FKAMLIAVGIHLLLLMFEVLV), 111 to 131 (FWLLVFMPLFFVSPVSVAACV), 168 to 188 (WLVVFVPLWILMSFLCLVVLY), 211 to 231 (VTMAICWITIVVPLLIFEVLL), and 240 to 260 (MFSYISIFVPLWLSLITLMAT).

It belongs to the TMEM185 family.

The protein localises to the membrane. The sequence is that of Transmembrane protein 185B (TMEM185B) from Bos taurus (Bovine).